Consider the following 356-residue polypeptide: MMDSRATYVPPKKISESNSNAEEDPTDCSKPITLKVPTVSETVLATIPHKPQRHLTVYLEGCVGVGKTTMFKYVVDNMFVHTAYDEPMDHWTKWFPENILQTIHEAVNLPTQEQHAYVFSCQNLIATSFLARESGIVKTHPAPFDPSVDVISIADRHALAAYVAFPIHHFLQGRFTYMELQCMLWAFKQDSVDTIFLLQGCSEETLRRVKRRNRKVEHGVTIEYINSLQAAYTVILSTWYRATEYQYSAKRTVSEEISFFIAGPRRTLFYILYDKRPITLPEIEILKLFRKISNDLKKLVLIPVNFQRLVYSSALRRLQDLLIVTPGVTSYIHNENVDTATCAVADNPHFNHHDVS.

A disordered region spans residues 1–29 (MMDSRATYVPPKKISESNSNAEEDPTDCS). Residue 61–68 (GCVGVGKT) participates in ATP binding. Glu86 functions as the Proton acceptor in the catalytic mechanism. Gln122 lines the substrate pocket. Arg208 lines the ATP pocket. Position 214 (Arg214) interacts with substrate.

It belongs to the herpesviridae thymidine kinase family. As to quaternary structure, homodimer.

The enzyme catalyses thymidine + ATP = dTMP + ADP + H(+). Functionally, catalyzes the transfer of the gamma-phospho group of ATP to thymidine to generate dTMP in the salvage pathway of pyrimidine synthesis. The dTMP serves as a substrate for DNA polymerase during viral DNA replication. Allows the virus to be reactivated and to grow in non-proliferative cells lacking a high concentration of phosphorylated nucleic acid precursors. The polypeptide is Thymidine kinase (Elephas maximus (Indian elephant)).